Here is a 115-residue protein sequence, read N- to C-terminus: Putative HNH nuclease YajD (115 aa).

The HNH domain occupies 27 to 75 (CGRCSREFVYSNLRELTVHHIDHDHTNNPEDGSNWELLCLYCHDHEHSK).

This sequence belongs to the HNH nuclease family.

This is Putative HNH nuclease YajD (yajD) from Escherichia coli O157:H7.